Reading from the N-terminus, the 504-residue chain is Maturase K (504 aa).

This sequence belongs to the intron maturase 2 family. MatK subfamily.

The protein localises to the plastid. It is found in the chloroplast. Usually encoded in the trnK tRNA gene intron. Probably assists in splicing its own and other chloroplast group II introns. This is Maturase K from Alliaria petiolata (Garlic mustard).